We begin with the raw amino-acid sequence, 252 residues long: Triosephosphate isomerase (252 aa).

Residue 10–12 (NWK) participates in substrate binding. His-96 functions as the Electrophile in the catalytic mechanism. Catalysis depends on Glu-168, which acts as the Proton acceptor. Substrate-binding positions include Gly-174, Ser-214, and 235-236 (GG).

It belongs to the triosephosphate isomerase family. As to quaternary structure, homodimer.

The protein resides in the cytoplasm. It carries out the reaction D-glyceraldehyde 3-phosphate = dihydroxyacetone phosphate. It participates in carbohydrate biosynthesis; gluconeogenesis. The protein operates within carbohydrate degradation; glycolysis; D-glyceraldehyde 3-phosphate from glycerone phosphate: step 1/1. Seems to be capable of enhancing bacteriocin synthesis. Its function is as follows. Involved in the gluconeogenesis. Catalyzes stereospecifically the conversion of dihydroxyacetone phosphate (DHAP) to D-glyceraldehyde-3-phosphate (G3P). The protein is Triosephosphate isomerase of Lactobacillus delbrueckii subsp. lactis.